A 309-amino-acid polypeptide reads, in one-letter code: Protoheme IX farnesyltransferase (309 aa).

Transmembrane regions (helical) follow at residues 35-55 (IGIV…ALYF), 64-84 (LHIV…SCSI), 114-134 (VLWL…MTTV), 135-155 (TAAI…TMWS), 161-181 (LNTV…WTAV), 187-207 (VVPL…FLAL), 236-256 (IVVW…LGVP), 257-277 (FLTV…YGFK), and 289-309 (FIYS…ATLW).

This sequence belongs to the UbiA prenyltransferase family. Protoheme IX farnesyltransferase subfamily. Interacts with CtaA.

The protein resides in the cell membrane. It catalyses the reaction heme b + (2E,6E)-farnesyl diphosphate + H2O = Fe(II)-heme o + diphosphate. The protein operates within porphyrin-containing compound metabolism; heme O biosynthesis; heme O from protoheme: step 1/1. Functionally, converts heme B (protoheme IX) to heme O by substitution of the vinyl group on carbon 2 of heme B porphyrin ring with a hydroxyethyl farnesyl side group. The chain is Protoheme IX farnesyltransferase from Geobacillus sp. (strain WCH70).